A 226-amino-acid polypeptide reads, in one-letter code: UPF0173 metal-dependent hydrolase Minf_0129 (226 aa).

Belongs to the UPF0173 family.

This Methylacidiphilum infernorum (isolate V4) (Methylokorus infernorum (strain V4)) protein is UPF0173 metal-dependent hydrolase Minf_0129.